The primary structure comprises 90 residues: Acylphosphatase (90 aa).

Residues 3 to 89 (ALKIRVEGIV…EGYEDFTIKY (87 aa)) form the Acylphosphatase-like domain. Catalysis depends on residues R18 and N36.

It belongs to the acylphosphatase family.

The catalysed reaction is an acyl phosphate + H2O = a carboxylate + phosphate + H(+). This chain is Acylphosphatase (acyP), found in Thermotoga maritima (strain ATCC 43589 / DSM 3109 / JCM 10099 / NBRC 100826 / MSB8).